The following is a 531-amino-acid chain: Keratin, type II cytoskeletal 79 (531 aa).

The segment covering 1-12 (MRSSLSRQTFST) has biased composition (polar residues). Positions 1–55 (MRSSLSRQTFSTKGGFSSNSASGGGGSRMRTSYSSVTMSRGSGGGGGVRSGSSSG) are disordered. Residues 1–138 (MRSSLSRQTF…DPEIQRVRTQ (138 aa)) are head. A compositionally biased stretch (low complexity) spans 28 to 40 (RMRTSYSSVTMSR). Positions 41–55 (GSGGGGGVRSGSSSG) are enriched in gly residues. The segment at 139 to 174 (EREQIKTLNNKFASFIDKVRFLEQQNKVLETKWALL) is coil 1A. An IF rod domain is found at 139 to 453 (EREQIKTLNN…KLLESEESRM (315 aa)). The linker 1 stretch occupies residues 175–194 (QEQSQNTGVARSLEPFFENY). Residues 195 to 286 (LSTLRRQLDT…QLFEMELSQV (92 aa)) are coil 1B. The segment at 287–310 (QTNVSDTNVILSMDNNRNLDLDSI) is linker 12. Residues 311–449 (IAEVKAQYEL…ATYRKLLESE (139 aa)) form a coil 2 region. The tract at residues 450–531 (ESRMSGDCPS…TTVKTSSRRY (82 aa)) is tail.

The protein belongs to the intermediate filament family. As to quaternary structure, heterotetramer of two type I and two type II keratins.

In Mus musculus (Mouse), this protein is Keratin, type II cytoskeletal 79 (Krt79).